Consider the following 67-residue polypeptide: Ferredoxin (67 aa).

2 consecutive 4Fe-4S ferredoxin-type domains span residues 3–31 and 36–67; these read WKVSVDQDTCIGDAICASLCPDVFEMNDE and PKVEVIEDEELYNCAKEAMEACPVSAITIEEA. The [4Fe-4S] cluster site is built by Cys-12, Asp-15, and Cys-18. The cysteines at positions 22 and 49 are disulfide-linked. Cys-57 serves as a coordination point for [4Fe-4S] cluster.

Homodimer. [4Fe-4S] cluster is required as a cofactor. [3Fe-4S] cluster serves as cofactor.

Ferredoxins are iron-sulfur proteins that transfer electrons in a wide variety of metabolic reactions. This is Ferredoxin (fdxA) from Pyrococcus furiosus (strain ATCC 43587 / DSM 3638 / JCM 8422 / Vc1).